The sequence spans 228 residues: Small ribosomal subunit protein uS3 (228 aa).

Residues 39–107 enclose the KH type-2 domain; it reads TREYLQDKLK…PVHINIEEIR (69 aa).

Belongs to the universal ribosomal protein uS3 family. Part of the 30S ribosomal subunit. Forms a tight complex with proteins S10 and S14.

Functionally, binds the lower part of the 30S subunit head. Binds mRNA in the 70S ribosome, positioning it for translation. This Pseudomonas putida (strain ATCC 700007 / DSM 6899 / JCM 31910 / BCRC 17059 / LMG 24140 / F1) protein is Small ribosomal subunit protein uS3.